We begin with the raw amino-acid sequence, 103 residues long: Putative membrane protein insertion efficiency factor (103 aa).

The protein belongs to the UPF0161 family.

It is found in the cell inner membrane. Could be involved in insertion of integral membrane proteins into the membrane. The protein is Putative membrane protein insertion efficiency factor of Chlamydia caviae (strain ATCC VR-813 / DSM 19441 / 03DC25 / GPIC) (Chlamydophila caviae).